Here is a 201-residue protein sequence, read N- to C-terminus: MKNAFFVTASIACGKSTFIEIANSLGFKSISADKIAHKILDENALELEKIFSPFNLKNLLTKEKKIDRKILGEIVFNNKEAKKTLENFTHPKIRAKILEQMQILDKENKAFFVEIPLFFESGAYENLGKVIVIYTPKELSLKRIMQRDKLSLEAAKVRLDSQIDIEEKLKKADFIIKNTNSYVDFRQECVKVIQEISKGKM.

Residues Ala-4–Met-201 form the DPCK domain. Ala-12 to Thr-17 is a binding site for ATP.

This sequence belongs to the CoaE family.

The protein resides in the cytoplasm. It carries out the reaction 3'-dephospho-CoA + ATP = ADP + CoA + H(+). It functions in the pathway cofactor biosynthesis; coenzyme A biosynthesis; CoA from (R)-pantothenate: step 5/5. In terms of biological role, catalyzes the phosphorylation of the 3'-hydroxyl group of dephosphocoenzyme A to form coenzyme A. The chain is Dephospho-CoA kinase from Campylobacter jejuni (strain RM1221).